The following is a 119-amino-acid chain: E3 ubiquitin-protein ligase PPP1R11 (119 aa).

The interval 1-42 (MAESSGPTAGGGATSSTVTTESDTQPEHRSLTLKLRKRKPDK) is disordered. Atypical RING finger domain stretches follow at residues 55–65 (NLGRRSSKCCC) and 87–96 (CESAHCIRGH). Residues 96 to 119 (HKKATSGSKETPSSHHDKTGSMQH) are disordered. Residues 107–119 (PSSHHDKTGSMQH) are compositionally biased toward basic and acidic residues.

It carries out the reaction S-ubiquitinyl-[E2 ubiquitin-conjugating enzyme]-L-cysteine + [acceptor protein]-L-lysine = [E2 ubiquitin-conjugating enzyme]-L-cysteine + N(6)-ubiquitinyl-[acceptor protein]-L-lysine.. The protein operates within protein modification; protein ubiquitination. Functionally, atypical E3 ubiquitin-protein ligase which ubiquitinates TLR2 at 'Lys-754' leading to its degradation by the proteasome. Inhibitor of protein phosphatase 1. This chain is E3 ubiquitin-protein ligase PPP1R11 (ppp1r11), found in Xenopus tropicalis (Western clawed frog).